A 228-amino-acid polypeptide reads, in one-letter code: 7-cyano-7-deazaguanine synthase (228 aa).

Residue 11–21 (LSGGLDSATVL) participates in ATP binding. Zn(2+) is bound by residues cysteine 191, cysteine 201, cysteine 204, and cysteine 207.

It belongs to the QueC family. Zn(2+) is required as a cofactor.

The enzyme catalyses 7-carboxy-7-deazaguanine + NH4(+) + ATP = 7-cyano-7-deazaguanine + ADP + phosphate + H2O + H(+). The protein operates within purine metabolism; 7-cyano-7-deazaguanine biosynthesis. Its function is as follows. Catalyzes the ATP-dependent conversion of 7-carboxy-7-deazaguanine (CDG) to 7-cyano-7-deazaguanine (preQ(0)). This is 7-cyano-7-deazaguanine synthase from Magnetococcus marinus (strain ATCC BAA-1437 / JCM 17883 / MC-1).